The chain runs to 197 residues: NADH-quinone oxidoreductase subunit C (197 aa).

It belongs to the complex I 30 kDa subunit family. NDH-1 is composed of 14 different subunits. Subunits NuoB, C, D, E, F, and G constitute the peripheral sector of the complex.

The protein resides in the cell inner membrane. It carries out the reaction a quinone + NADH + 5 H(+)(in) = a quinol + NAD(+) + 4 H(+)(out). Functionally, NDH-1 shuttles electrons from NADH, via FMN and iron-sulfur (Fe-S) centers, to quinones in the respiratory chain. The immediate electron acceptor for the enzyme in this species is believed to be ubiquinone. Couples the redox reaction to proton translocation (for every two electrons transferred, four hydrogen ions are translocated across the cytoplasmic membrane), and thus conserves the redox energy in a proton gradient. This chain is NADH-quinone oxidoreductase subunit C, found in Methylobacillus flagellatus (strain ATCC 51484 / DSM 6875 / VKM B-1610 / KT).